The sequence spans 303 residues: Hydroxyacylglutathione hydrolase, mitochondrial (303 aa).

Zn(2+) is bound by residues histidine 97, histidine 99, aspartate 101, histidine 102, histidine 153, and aspartate 177. Substrate is bound by residues 186-188 (KFF), 216-218 (HEY), and 292-295 (RKEK). Histidine 216 contacts Zn(2+).

The protein belongs to the metallo-beta-lactamase superfamily. Glyoxalase II family. In terms of assembly, monomer. Zn(2+) is required as a cofactor.

It is found in the mitochondrion matrix. The protein resides in the cytoplasm. The catalysed reaction is an S-(2-hydroxyacyl)glutathione + H2O = a 2-hydroxy carboxylate + glutathione + H(+). It catalyses the reaction (R)-S-lactoylglutathione + H2O = (R)-lactate + glutathione + H(+). Functionally, thiolesterase that catalyzes the hydrolysis of S-D-lactoyl-glutathione to form glutathione and D-lactic acid. In Danio rerio (Zebrafish), this protein is Hydroxyacylglutathione hydrolase, mitochondrial (hagh).